A 178-amino-acid chain; its full sequence is Large ribosomal subunit protein uL6 (178 aa).

This sequence belongs to the universal ribosomal protein uL6 family. Part of the 50S ribosomal subunit.

Functionally, this protein binds to the 23S rRNA, and is important in its secondary structure. It is located near the subunit interface in the base of the L7/L12 stalk, and near the tRNA binding site of the peptidyltransferase center. This Nautilia profundicola (strain ATCC BAA-1463 / DSM 18972 / AmH) protein is Large ribosomal subunit protein uL6.